The sequence spans 45 residues: Defensin Tk-AMP-D3 (45 aa).

4 disulfides stabilise this stretch: Cys-3/Cys-45, Cys-14/Cys-34, Cys-20/Cys-39, and Cys-24/Cys-41.

Plant defense peptide. The sequence is that of Defensin Tk-AMP-D3 from Triticum kiharae (Wheat).